Consider the following 132-residue polypeptide: UPF0102 protein Acid_2433 (132 aa).

Belongs to the UPF0102 family.

This Solibacter usitatus (strain Ellin6076) protein is UPF0102 protein Acid_2433.